Consider the following 187-residue polypeptide: MENQEKVEQAVYQLLEALGENPEREGLLDTPKRVAKMYAEMFSGLNEDPKDQFTAVFSEVHDEVVLVKDIPFYSMCEHHLVPFYGMAHVAYLPSGDKVTGLSKLARAVEVAARRPQLQERLTDQVATALEEALNPRGVFVMVEAEHMCMTMRGIKKPGSKTITTVAKGIYKEDREERKEILSLMRDF.

Cys76, His79, and Cys148 together coordinate Zn(2+).

The protein belongs to the GTP cyclohydrolase I family. In terms of assembly, toroid-shaped homodecamer, composed of two pentamers of five dimers.

It carries out the reaction GTP + H2O = 7,8-dihydroneopterin 3'-triphosphate + formate + H(+). It functions in the pathway cofactor biosynthesis; 7,8-dihydroneopterin triphosphate biosynthesis; 7,8-dihydroneopterin triphosphate from GTP: step 1/1. This chain is GTP cyclohydrolase 1, found in Streptococcus thermophilus (strain CNRZ 1066).